Consider the following 339-residue polypeptide: Nicotinate-nucleotide--dimethylbenzimidazole phosphoribosyltransferase (339 aa).

E306 serves as the catalytic Proton acceptor.

The protein belongs to the CobT family.

It catalyses the reaction 5,6-dimethylbenzimidazole + nicotinate beta-D-ribonucleotide = alpha-ribazole 5'-phosphate + nicotinate + H(+). Its pathway is nucleoside biosynthesis; alpha-ribazole biosynthesis; alpha-ribazole from 5,6-dimethylbenzimidazole: step 1/2. Functionally, catalyzes the synthesis of alpha-ribazole-5'-phosphate from nicotinate mononucleotide (NAMN) and 5,6-dimethylbenzimidazole (DMB). This is Nicotinate-nucleotide--dimethylbenzimidazole phosphoribosyltransferase from Brucella anthropi (strain ATCC 49188 / DSM 6882 / CCUG 24695 / JCM 21032 / LMG 3331 / NBRC 15819 / NCTC 12168 / Alc 37) (Ochrobactrum anthropi).